The following is a 394-amino-acid chain: Lipid-A-disaccharide synthase (394 aa).

The protein belongs to the LpxB family.

It carries out the reaction 2-N,3-O-bis[(3R)-3-hydroxytetradecanoyl]-alpha-D-glucosaminyl 1-phosphate + UDP-2-N,3-O-bis[(3R)-3-hydroxytetradecanoyl]-alpha-D-glucosamine = lipid A disaccharide (E. coli) + UDP + H(+). It catalyses the reaction a lipid X + a UDP-2-N,3-O-bis[(3R)-3-hydroxyacyl]-alpha-D-glucosamine = a lipid A disaccharide + UDP + H(+). Its pathway is glycolipid biosynthesis; lipid IV(A) biosynthesis; lipid IV(A) from (3R)-3-hydroxytetradecanoyl-[acyl-carrier-protein] and UDP-N-acetyl-alpha-D-glucosamine: step 5/6. Functionally, condensation of UDP-2,3-diacylglucosamine and 2,3-diacylglucosamine-1-phosphate to form lipid A disaccharide, a precursor of lipid A, a phosphorylated glycolipid that anchors the lipopolysaccharide to the outer membrane of the cell. This Yersinia pestis protein is Lipid-A-disaccharide synthase.